The following is a 126-amino-acid chain: Major sperm protein 3 (126 aa).

Ala2 bears the N-acetylalanine mark. Residues 8-125 (DIATMPAQKV…RRKNLPIEYN (118 aa)) enclose the MSP domain.

As to expression, sperm.

The protein localises to the cell projection. Its subcellular location is the pseudopodium. It is found in the cytoplasm. It localises to the cytoskeleton. Its function is as follows. Central component in molecular interactions underlying sperm crawling. Forms an extensive filament system that extends from sperm villipoda, along the leading edge of the pseudopod. This Globodera rostochiensis (Golden nematode worm) protein is Major sperm protein 3 (MSP-3).